A 160-amino-acid polypeptide reads, in one-letter code: Cytochrome b6-f complex subunit 4 (160 aa).

Transmembrane regions (helical) follow at residues 36 to 56 (LLYIFPVCIFGTIACTVGLSV), 95 to 115 (LLGVLLMAGVPVGLLTVPFIE), and 131 to 151 (TVFLLGTVVAIWLGIGAALPI).

It belongs to the cytochrome b family. PetD subfamily. As to quaternary structure, the 4 large subunits of the cytochrome b6-f complex are cytochrome b6, subunit IV (17 kDa polypeptide, petD), cytochrome f and the Rieske protein, while the 4 small subunits are petG, petL, petM and petN. The complex functions as a dimer.

It localises to the plastid. The protein resides in the chloroplast thylakoid membrane. In terms of biological role, component of the cytochrome b6-f complex, which mediates electron transfer between photosystem II (PSII) and photosystem I (PSI), cyclic electron flow around PSI, and state transitions. This chain is Cytochrome b6-f complex subunit 4, found in Chaetosphaeridium globosum (Charophycean green alga).